The following is a 508-amino-acid chain: POTE ankyrin domain family member G (508 aa).

ANK repeat units lie at residues 172-201 (QKRT…QLNI), 205-234 (KKRT…DPNI), 238-267 (YGNT…DIES), 271-300 (HGLT…NLNA), and 304-333 (YGRT…DVSS). The span at 367–376 (KVSSENSNPE) shows a compositional bias: polar residues. The tract at residues 367-488 (KVSSENSNPE…QLSEEQNTGI (122 aa)) is disordered. Composition is skewed to basic and acidic residues over residues 377 to 392 (QDLK…RLKG) and 406 to 421 (EINK…EMKK). Over residues 476–488 (TQKQLSEEQNTGI) the composition is skewed to polar residues.

The protein belongs to the POTE family.

This chain is POTE ankyrin domain family member G (POTEG), found in Homo sapiens (Human).